Consider the following 322-residue polypeptide: Lipoyl synthase (322 aa).

The interval Met1 to Gln24 is disordered. Positions Arg14–Gln24 are enriched in basic and acidic residues. Residues Cys59, Cys64, Cys70, Cys85, Cys89, Cys92, and Ser298 each coordinate [4Fe-4S] cluster. The region spanning Trp71–Leu287 is the Radical SAM core domain.

This sequence belongs to the radical SAM superfamily. Lipoyl synthase family. It depends on [4Fe-4S] cluster as a cofactor.

The protein resides in the cytoplasm. It catalyses the reaction [[Fe-S] cluster scaffold protein carrying a second [4Fe-4S](2+) cluster] + N(6)-octanoyl-L-lysyl-[protein] + 2 oxidized [2Fe-2S]-[ferredoxin] + 2 S-adenosyl-L-methionine + 4 H(+) = [[Fe-S] cluster scaffold protein] + N(6)-[(R)-dihydrolipoyl]-L-lysyl-[protein] + 4 Fe(3+) + 2 hydrogen sulfide + 2 5'-deoxyadenosine + 2 L-methionine + 2 reduced [2Fe-2S]-[ferredoxin]. Its pathway is protein modification; protein lipoylation via endogenous pathway; protein N(6)-(lipoyl)lysine from octanoyl-[acyl-carrier-protein]: step 2/2. Its function is as follows. Catalyzes the radical-mediated insertion of two sulfur atoms into the C-6 and C-8 positions of the octanoyl moiety bound to the lipoyl domains of lipoate-dependent enzymes, thereby converting the octanoylated domains into lipoylated derivatives. The polypeptide is Lipoyl synthase (Chelativorans sp. (strain BNC1)).